The chain runs to 153 residues: 3-hydroxyacyl-[acyl-carrier-protein] dehydratase FabZ (153 aa).

The active site involves His52.

It belongs to the thioester dehydratase family. FabZ subfamily.

Its subcellular location is the cytoplasm. It carries out the reaction a (3R)-hydroxyacyl-[ACP] = a (2E)-enoyl-[ACP] + H2O. Functionally, involved in unsaturated fatty acids biosynthesis. Catalyzes the dehydration of short chain beta-hydroxyacyl-ACPs and long chain saturated and unsaturated beta-hydroxyacyl-ACPs. The chain is 3-hydroxyacyl-[acyl-carrier-protein] dehydratase FabZ from Magnetococcus marinus (strain ATCC BAA-1437 / JCM 17883 / MC-1).